The primary structure comprises 291 residues: Secreted effector protein PipB (291 aa).

Pentapeptide repeat domains are found at residues 154–193 (LNLRGVNLAHKDFQGEDLSKIDASNADFRETTLSNVNLVG) and 199–238 (ANLHAVNLMGSNMTKANLTHADLTCANMSGVNLTAAILFG).

It localises to the secreted. It is found in the host membrane. Its function is as follows. Effector proteins function to alter host cell physiology and promote bacterial survival in host tissues. Does not appear to be required for the formation or the maintenance of either Salmonella-containing vacuole (SCV) or the Salmonella-induced filaments (Sifs). Not required for intracellular replication in phagocytic cells. This chain is Secreted effector protein PipB (pipB), found in Salmonella typhimurium (strain LT2 / SGSC1412 / ATCC 700720).